The primary structure comprises 426 residues: Serine--tRNA ligase (426 aa).

Residue 233-235 (TAE) participates in L-serine binding. 264–266 (RSE) serves as a coordination point for ATP. An L-serine-binding site is contributed by glutamate 287. 351–354 (EISS) provides a ligand contact to ATP. Serine 387 provides a ligand contact to L-serine.

This sequence belongs to the class-II aminoacyl-tRNA synthetase family. Type-1 seryl-tRNA synthetase subfamily. In terms of assembly, homodimer. The tRNA molecule binds across the dimer.

Its subcellular location is the cytoplasm. It carries out the reaction tRNA(Ser) + L-serine + ATP = L-seryl-tRNA(Ser) + AMP + diphosphate + H(+). It catalyses the reaction tRNA(Sec) + L-serine + ATP = L-seryl-tRNA(Sec) + AMP + diphosphate + H(+). It participates in aminoacyl-tRNA biosynthesis; selenocysteinyl-tRNA(Sec) biosynthesis; L-seryl-tRNA(Sec) from L-serine and tRNA(Sec): step 1/1. In terms of biological role, catalyzes the attachment of serine to tRNA(Ser). Is also able to aminoacylate tRNA(Sec) with serine, to form the misacylated tRNA L-seryl-tRNA(Sec), which will be further converted into selenocysteinyl-tRNA(Sec). This is Serine--tRNA ligase from Clostridium botulinum (strain Kyoto / Type A2).